We begin with the raw amino-acid sequence, 489 residues long: Glycogen synthase (489 aa).

Lys15 serves as a coordination point for ADP-alpha-D-glucose.

It belongs to the glycosyltransferase 1 family. Bacterial/plant glycogen synthase subfamily.

The catalysed reaction is [(1-&gt;4)-alpha-D-glucosyl](n) + ADP-alpha-D-glucose = [(1-&gt;4)-alpha-D-glucosyl](n+1) + ADP + H(+). The protein operates within glycan biosynthesis; glycogen biosynthesis. Functionally, synthesizes alpha-1,4-glucan chains using ADP-glucose. The chain is Glycogen synthase from Francisella tularensis subsp. tularensis (strain SCHU S4 / Schu 4).